Here is a 368-residue protein sequence, read N- to C-terminus: 2-aminoethylphosphonate--pyruvate transaminase (368 aa).

The residue at position 192 (lysine 192) is an N6-(pyridoxal phosphate)lysine.

Belongs to the class-V pyridoxal-phosphate-dependent aminotransferase family. PhnW subfamily. As to quaternary structure, homodimer. The cofactor is pyridoxal 5'-phosphate.

It catalyses the reaction (2-aminoethyl)phosphonate + pyruvate = phosphonoacetaldehyde + L-alanine. Involved in phosphonate degradation. The chain is 2-aminoethylphosphonate--pyruvate transaminase from Pseudomonas putida (strain GB-1).